The following is a 481-amino-acid chain: NADH-quinone oxidoreductase subunit N (481 aa).

A run of 13 helical transmembrane segments spans residues 9-29 (MLPE…GIVV), 39-59 (AVSM…DHVA), 76-96 (CISR…FLCA), 104-124 (FSVV…AGHF), 158-178 (FFIL…LVYG), 205-225 (AFVL…MWAV), 232-252 (PMAA…LLLA), 265-285 (ILYG…LGAL), 293-313 (LLAY…VLHG), 318-338 (AIFH…SVLL), 359-379 (FVAF…PFLG), 399-419 (VAFP…FYCF), and 443-463 (LGLT…LFLA).

This sequence belongs to the complex I subunit 2 family. NDH-1 is composed of 14 different subunits. Subunits NuoA, H, J, K, L, M, N constitute the membrane sector of the complex.

It is found in the cell inner membrane. The enzyme catalyses a quinone + NADH + 5 H(+)(in) = a quinol + NAD(+) + 4 H(+)(out). In terms of biological role, NDH-1 shuttles electrons from NADH, via FMN and iron-sulfur (Fe-S) centers, to quinones in the respiratory chain. The immediate electron acceptor for the enzyme in this species is believed to be ubiquinone. Couples the redox reaction to proton translocation (for every two electrons transferred, four hydrogen ions are translocated across the cytoplasmic membrane), and thus conserves the redox energy in a proton gradient. The sequence is that of NADH-quinone oxidoreductase subunit N from Anaplasma marginale (strain Florida).